The primary structure comprises 273 residues: Cell division protein ZipA (273 aa).

Residue Met1 is a topological domain, periplasmic. The helical transmembrane segment at 2 to 22 (DIGLREWLIVIGIIVIAGILF) threads the bilayer. At 23–273 (DGWRRMRGGK…ERRQMTIKQR (251 aa)) the chain is on the cytoplasmic side. The tract at residues 61-127 (VVNREHEPSL…DLQERPQKEQ (67 aa)) is disordered.

It belongs to the ZipA family. As to quaternary structure, interacts with FtsZ via their C-terminal domains.

The protein resides in the cell inner membrane. Functionally, essential cell division protein that stabilizes the FtsZ protofilaments by cross-linking them and that serves as a cytoplasmic membrane anchor for the Z ring. Also required for the recruitment to the septal ring of downstream cell division proteins. The sequence is that of Cell division protein ZipA from Stutzerimonas stutzeri (strain A1501) (Pseudomonas stutzeri).